A 239-amino-acid chain; its full sequence is Small ribosomal subunit protein eS6B (239 aa).

Phosphoserine is present on residues S148, S235, and S236.

Belongs to the eukaryotic ribosomal protein eS6 family. As to quaternary structure, component of the small ribosomal subunit (SSU). Mature yeast ribosomes consist of a small (40S) and a large (60S) subunit. The 40S small subunit contains 1 molecule of ribosomal RNA (18S rRNA) and at least 33 different proteins. The large 60S subunit contains 3 rRNA molecules (25S, 5.8S and 5S rRNA) and at least 46 different proteins. Interacts with snoRNA U3. uS11 interacts with MPP10. Component of the ribosomal small subunit (SSU) processome composed of at least 40 protein subunits and snoRNA U3.

It localises to the cytoplasm. Its function is as follows. Component of the ribosome, a large ribonucleoprotein complex responsible for the synthesis of proteins in the cell. The small ribosomal subunit (SSU) binds messenger RNAs (mRNAs) and translates the encoded message by selecting cognate aminoacyl-transfer RNA (tRNA) molecules. The large subunit (LSU) contains the ribosomal catalytic site termed the peptidyl transferase center (PTC), which catalyzes the formation of peptide bonds, thereby polymerizing the amino acids delivered by tRNAs into a polypeptide chain. The nascent polypeptides leave the ribosome through a tunnel in the LSU and interact with protein factors that function in enzymatic processing, targeting, and the membrane insertion of nascent chains at the exit of the ribosomal tunnel. eS6 is involved in nucleolar processing of pre-18S ribosomal RNA and ribosome assembly. The protein is Small ribosomal subunit protein eS6B (rps602) of Schizosaccharomyces pombe (strain 972 / ATCC 24843) (Fission yeast).